The sequence spans 172 residues: MPPFRAVILFRHMEINVIVKPPFKKLVSTPFLKKIASKTLKAQAADPNSELGIVITGQEEIKDLNLKYRGLDEPTDVLSFYMLEENPENLTAADDFPTPPDENIHLGEVIISYPQAELQATAASHSVSHEIAFLLIHGVLHLLGYDHHEVVAEAVMKSHQDIAMKHIREILE.

The Zn(2+) site is built by H137, H141, and H147.

It belongs to the endoribonuclease YbeY family. Requires Zn(2+) as cofactor.

It localises to the cytoplasm. In terms of biological role, single strand-specific metallo-endoribonuclease involved in late-stage 70S ribosome quality control and in maturation of the 3' terminus of the 16S rRNA. The chain is Endoribonuclease YbeY from Dehalococcoides mccartyi (strain ATCC BAA-2266 / KCTC 15142 / 195) (Dehalococcoides ethenogenes (strain 195)).